Here is a 341-residue protein sequence, read N- to C-terminus: L-threonine 3-dehydrogenase (341 aa).

Cysteine 38 is a Zn(2+) binding site. Active-site charge relay system residues include threonine 40 and histidine 43. Zn(2+) is bound by residues histidine 63, glutamate 64, cysteine 93, cysteine 96, cysteine 99, and cysteine 107. NAD(+) contacts are provided by residues isoleucine 175, aspartate 195, arginine 200, 262–264 (LGI), and 286–287 (IY).

Belongs to the zinc-containing alcohol dehydrogenase family. In terms of assembly, homotetramer. It depends on Zn(2+) as a cofactor.

The protein resides in the cytoplasm. It catalyses the reaction L-threonine + NAD(+) = (2S)-2-amino-3-oxobutanoate + NADH + H(+). It participates in amino-acid degradation; L-threonine degradation via oxydo-reductase pathway; glycine from L-threonine: step 1/2. Functionally, catalyzes the NAD(+)-dependent oxidation of L-threonine to 2-amino-3-ketobutyrate. The chain is L-threonine 3-dehydrogenase from Yersinia pestis bv. Antiqua (strain Antiqua).